Consider the following 148-residue polypeptide: Small ribosomal subunit protein bS16 (148 aa).

The segment at 106-148 is disordered; sequence QAAARAAAGAEDRPATTPKKAKKSGSAEEAEAAPATDAPAAGQ. The segment covering 137–148 has biased composition (low complexity); the sequence is AAPATDAPAAGQ.

It belongs to the bacterial ribosomal protein bS16 family.

This Frankia casuarinae (strain DSM 45818 / CECT 9043 / HFP020203 / CcI3) protein is Small ribosomal subunit protein bS16.